The following is a 112-amino-acid chain: Conotoxin vil14.5 (112 aa).

An N-terminal signal peptide occupies residues 1–22; sequence MGFRVLVLVVMATTSALPFTFS. The propeptide occupies 23-85; it reads EEPGRSPFRP…FAELSVGQRR (63 aa). A disordered region spans residues 53 to 74; it reads RADGQPPDMRQPEMRRPEVRQP. Residues 62–74 are compositionally biased toward basic and acidic residues; the sequence is RQPEMRRPEVRQP. 2 cysteine pairs are disulfide-bonded: Cys-91/Cys-111 and Cys-95/Cys-107.

It belongs to the conotoxin R superfamily. In terms of tissue distribution, expressed by the venom duct.

Its subcellular location is the secreted. This chain is Conotoxin vil14.5, found in Conus villepinii (Villepin's cone).